The following is a 503-amino-acid chain: Probable cytosol aminopeptidase (503 aa).

Mn(2+) is bound by residues Lys-274 and Asp-279. Lys-286 is a catalytic residue. Positions 297, 356, and 358 each coordinate Mn(2+). Arg-360 is an active-site residue.

It belongs to the peptidase M17 family. Mn(2+) is required as a cofactor.

Its subcellular location is the cytoplasm. It catalyses the reaction Release of an N-terminal amino acid, Xaa-|-Yaa-, in which Xaa is preferably Leu, but may be other amino acids including Pro although not Arg or Lys, and Yaa may be Pro. Amino acid amides and methyl esters are also readily hydrolyzed, but rates on arylamides are exceedingly low.. The enzyme catalyses Release of an N-terminal amino acid, preferentially leucine, but not glutamic or aspartic acids.. In terms of biological role, presumably involved in the processing and regular turnover of intracellular proteins. Catalyzes the removal of unsubstituted N-terminal amino acids from various peptides. In Burkholderia ambifaria (strain MC40-6), this protein is Probable cytosol aminopeptidase.